We begin with the raw amino-acid sequence, 167 residues long: Dual specificity protein phosphatase 1B (167 aa).

A Tyrosine-protein phosphatase domain is found at 24–165; it reads DLSEIQQGLF…LQQFEKSIQG (142 aa). The active-site Phosphocysteine intermediate is the Cys109.

It belongs to the protein-tyrosine phosphatase family. Non-receptor class dual specificity subfamily. Associates with MPK3 and MPK6. Interacts with MPK6 is promoted during HR-like responses triggered by fungal elicitors, whereas interaction with MPK3 in repressed. As to expression, expressed in flowers, seedlings, roots, leaves, and seeds. Present in stomata and meristematic cells.

The protein resides in the nucleus. It localises to the cytoplasm. It carries out the reaction O-phospho-L-tyrosyl-[protein] + H2O = L-tyrosyl-[protein] + phosphate. The catalysed reaction is O-phospho-L-seryl-[protein] + H2O = L-seryl-[protein] + phosphate. It catalyses the reaction O-phospho-L-threonyl-[protein] + H2O = L-threonyl-[protein] + phosphate. Functionally, has a dual specificity toward Ser/Thr and Tyr-containing proteins. Prevents biotic and abiotic stress responses, including ozone, oxidative stress and pathogen attacks; represses MAPK activities during hypersensitive response to limit the spread of the HR response after infection by necrotrophic pathogen such as Botrytis cinerea. May be also involved in ABA and salt responses. Dephosphorylates MPK3 and MPK6. The polypeptide is Dual specificity protein phosphatase 1B (DSPTP1B) (Arabidopsis thaliana (Mouse-ear cress)).